The sequence spans 217 residues: Large ribosomal subunit protein uL1 (217 aa).

This sequence belongs to the universal ribosomal protein uL1 family. In terms of assembly, part of the 50S ribosomal subunit.

In terms of biological role, binds directly to 23S rRNA. Probably involved in E site tRNA release. Protein L1 is also a translational repressor protein, it controls the translation of its operon by binding to its mRNA. This Aeropyrum pernix (strain ATCC 700893 / DSM 11879 / JCM 9820 / NBRC 100138 / K1) protein is Large ribosomal subunit protein uL1.